The primary structure comprises 416 residues: Homogentisate 1,2-dioxygenase (416 aa).

The active-site Proton acceptor is His-275. Residues His-318 and Glu-324 each coordinate Fe cation. Tyr-333 and His-354 together coordinate homogentisate. Fe cation is bound at residue His-354.

Belongs to the homogentisate dioxygenase family. Hexamer; dimer of trimers. Fe cation is required as a cofactor.

It catalyses the reaction homogentisate + O2 = 4-maleylacetoacetate + H(+). Its pathway is amino-acid degradation; L-phenylalanine degradation; acetoacetate and fumarate from L-phenylalanine: step 4/6. Involved in the catabolism of homogentisate (2,5-dihydroxyphenylacetate or 2,5-OH-PhAc), a central intermediate in the degradation of phenylalanine and tyrosine. Catalyzes the oxidative ring cleavage of the aromatic ring of homogentisate to yield maleylacetoacetate. The chain is Homogentisate 1,2-dioxygenase from Legionella pneumophila (strain Lens).